Here is a 433-residue protein sequence, read N- to C-terminus: ATP-dependent protease ATPase subunit HslU (433 aa).

ATP contacts are provided by residues isoleucine 18, 60 to 65 (GVGKTE), aspartate 246, glutamate 311, and arginine 383.

Belongs to the ClpX chaperone family. HslU subfamily. A double ring-shaped homohexamer of HslV is capped on each side by a ring-shaped HslU homohexamer. The assembly of the HslU/HslV complex is dependent on binding of ATP.

The protein localises to the cytoplasm. Functionally, ATPase subunit of a proteasome-like degradation complex; this subunit has chaperone activity. The binding of ATP and its subsequent hydrolysis by HslU are essential for unfolding of protein substrates subsequently hydrolyzed by HslV. HslU recognizes the N-terminal part of its protein substrates and unfolds these before they are guided to HslV for hydrolysis. In Cereibacter sphaeroides (strain ATCC 17029 / ATH 2.4.9) (Rhodobacter sphaeroides), this protein is ATP-dependent protease ATPase subunit HslU.